Here is a 473-residue protein sequence, read N- to C-terminus: Vasculin-like protein 1 (473 aa).

Over residues 14-25 the composition is skewed to polar residues; the sequence is STPQSSKSSTAT. The segment at 14–55 is disordered; sequence STPQSSKSSTATFDKHGEHLSRGEGRFGISRRRHNSSDGFFN. Residues 26–38 are compositionally biased toward basic and acidic residues; that stretch reads FDKHGEHLSRGEG. Serine 49 and serine 76 each carry phosphoserine. Disordered regions lie at residues 88 to 127 and 155 to 189; these read GTTG…RKGC and DFPS…AKQP. Polar residues predominate over residues 103–112; that stretch reads SQRSGGSSTG. Over residues 113 to 125 the composition is skewed to basic residues; sequence NHRHWNGSFHSRK. Serine 199 bears the Phosphoserine mark. Disordered stretches follow at residues 235-267 and 281-316; these read LVPK…SRES and LAAG…RRTT. Serine 289 carries the phosphoserine modification. A compositionally biased stretch (low complexity) spans 292–309; it reads ESPSSTTPPIEISSSRLT. Phosphothreonine is present on threonine 298. Serine 381 is modified (phosphoserine). Residues 453–473 form a disordered region; sequence ECEDSDSETSSSQTSDDDAWK.

The protein belongs to the vasculin family.

It localises to the nucleus. Possible transcription factor. This Mus musculus (Mouse) protein is Vasculin-like protein 1 (Gpbp1l1).